Here is a 502-residue protein sequence, read N- to C-terminus: ATP synthase subunit alpha 1/3 (502 aa).

169–176 (GDRQTGKT) contacts ATP.

The protein belongs to the ATPase alpha/beta chains family. In terms of assembly, F-type ATPases have 2 components, CF(1) - the catalytic core - and CF(0) - the membrane proton channel. CF(1) has five subunits: alpha(3), beta(3), gamma(1), delta(1), epsilon(1). CF(0) has three main subunits: a(1), b(2) and c(9-12). The alpha and beta chains form an alternating ring which encloses part of the gamma chain. CF(1) is attached to CF(0) by a central stalk formed by the gamma and epsilon chains, while a peripheral stalk is formed by the delta and b chains.

The protein resides in the cell inner membrane. It carries out the reaction ATP + H2O + 4 H(+)(in) = ADP + phosphate + 5 H(+)(out). Functionally, produces ATP from ADP in the presence of a proton gradient across the membrane. The alpha chain is a regulatory subunit. This Syntrophotalea carbinolica (strain DSM 2380 / NBRC 103641 / GraBd1) (Pelobacter carbinolicus) protein is ATP synthase subunit alpha 1/3.